Consider the following 148-residue polypeptide: Transcription antitermination protein NusB (148 aa).

The protein belongs to the NusB family.

Functionally, involved in transcription antitermination. Required for transcription of ribosomal RNA (rRNA) genes. Binds specifically to the boxA antiterminator sequence of the ribosomal RNA (rrn) operons. In Novosphingobium aromaticivorans (strain ATCC 700278 / DSM 12444 / CCUG 56034 / CIP 105152 / NBRC 16084 / F199), this protein is Transcription antitermination protein NusB.